We begin with the raw amino-acid sequence, 238 residues long: Phosphoribosylaminoimidazole-succinocarboxamide synthase (238 aa).

The protein belongs to the SAICAR synthetase family.

The enzyme catalyses 5-amino-1-(5-phospho-D-ribosyl)imidazole-4-carboxylate + L-aspartate + ATP = (2S)-2-[5-amino-1-(5-phospho-beta-D-ribosyl)imidazole-4-carboxamido]succinate + ADP + phosphate + 2 H(+). It functions in the pathway purine metabolism; IMP biosynthesis via de novo pathway; 5-amino-1-(5-phospho-D-ribosyl)imidazole-4-carboxamide from 5-amino-1-(5-phospho-D-ribosyl)imidazole-4-carboxylate: step 1/2. The protein is Phosphoribosylaminoimidazole-succinocarboxamide synthase of Desulfitobacterium hafniense (strain Y51).